Reading from the N-terminus, the 192-residue chain is Imidazole glycerol phosphate synthase subunit HisH (192 aa).

The Glutamine amidotransferase type-1 domain occupies 1 to 192; it reads MIAIIDYGLG…QALKGGFIND (192 aa). Cysteine 77 serves as the catalytic Nucleophile. Catalysis depends on residues histidine 169 and glutamate 171.

In terms of assembly, heterodimer of HisH and HisF.

Its subcellular location is the cytoplasm. It carries out the reaction 5-[(5-phospho-1-deoxy-D-ribulos-1-ylimino)methylamino]-1-(5-phospho-beta-D-ribosyl)imidazole-4-carboxamide + L-glutamine = D-erythro-1-(imidazol-4-yl)glycerol 3-phosphate + 5-amino-1-(5-phospho-beta-D-ribosyl)imidazole-4-carboxamide + L-glutamate + H(+). It catalyses the reaction L-glutamine + H2O = L-glutamate + NH4(+). Its pathway is amino-acid biosynthesis; L-histidine biosynthesis; L-histidine from 5-phospho-alpha-D-ribose 1-diphosphate: step 5/9. Functionally, IGPS catalyzes the conversion of PRFAR and glutamine to IGP, AICAR and glutamate. The HisH subunit catalyzes the hydrolysis of glutamine to glutamate and ammonia as part of the synthesis of IGP and AICAR. The resulting ammonia molecule is channeled to the active site of HisF. The polypeptide is Imidazole glycerol phosphate synthase subunit HisH (Staphylococcus epidermidis (strain ATCC 12228 / FDA PCI 1200)).